The sequence spans 256 residues: Protein RGF1 INDUCIBLE TRANSCRIPTION FACTOR 1 (256 aa).

The segment at 21-59 adopts a B box-type zinc-finger fold; it reads CPYHETAKKNERNVCCLDCCTSLCPHCVPSHRFHRLLQV.

Expressed predominantly in root meristematic zones.

It is found in the nucleus. In terms of biological role, probable transcription factor that plays a central role in mediating RGF1 hormone peptide signaling leading to the production of reactive oxygen species (ROS) in roots to modulate meristem size and root growth, probably via oxidative post-translational modification of the transcription factor PLETHORA (e.g. PLT1 and PLT2). This Arabidopsis thaliana (Mouse-ear cress) protein is Protein RGF1 INDUCIBLE TRANSCRIPTION FACTOR 1.